Reading from the N-terminus, the 550-residue chain is MTPADLAELLKTTAIVVLAERGLDAAALPQTVTVERPRNPEHGDYSSNLAMQLGKKVGANPLELAGWLAEVLAQAGGIADVEVAGPGFINMRLDASAQAMIVNTVINADKNFGHSDDLAGYQINLEFVSANPTGPIHIGGTRWAAVGDALGRLLSTQGAAVVREYYFNDHGAQIDRFTNSLIAAAKGELTPADGYAGTYVTDIAAQVMQQAPYALSLPESEMHETVREIGVDLMFTHIKKSLHEFGTDFDVYTHEDSMHASGRVDEAIARLRDTGNVYEKDGALWLRTSAFGDDKDRVVIKSDGKPAYIAGDLAYYLDKRQRGFDLCIYMLGADHHGYIARLKAAAAAFGDDPAIVEVLIGQMVNLVCDGQLVRMSKRSGNVITLDDLVEAIGVDAARYSLIRSSVDTPIDIDLALWSSSSNENPVYYVQYAHARLSALARNAAEFGLIPDTGHLELLSHDKEGALLRTVGEFPQVLKTAAALREPHRVCRYLEDLAGDYHRFYDSCRVLPQGDEKPTDLHTARLALCQANRQVIANGLAILGVSAPERM.

Positions 130 to 140 match the 'HIGH' region motif; that stretch reads ANPTGPIHIGG.

Belongs to the class-I aminoacyl-tRNA synthetase family. As to quaternary structure, monomer.

It is found in the cytoplasm. The catalysed reaction is tRNA(Arg) + L-arginine + ATP = L-arginyl-tRNA(Arg) + AMP + diphosphate. The sequence is that of Arginine--tRNA ligase (argS) from Mycobacterium leprae (strain TN).